A 54-amino-acid chain; its full sequence is Putative ATP synthase subunit epsilon, mitochondrial (54 aa).

Belongs to the eukaryotic ATPase epsilon family. F-type ATPases have 2 components, CF(1) - the catalytic core - and CF(0) - the membrane proton channel. CF(1) has five subunits: alpha(3), beta(3), gamma(1), delta(1), epsilon(1). CF(0) seems to have nine subunits: a, b, c, d, e, f, g, F6 and 8 (or A6L).

The protein localises to the mitochondrion. It is found in the mitochondrion inner membrane. Mitochondrial membrane ATP synthase (F(1)F(0) ATP synthase or Complex V) produces ATP from ADP in the presence of a proton gradient across the membrane which is generated by electron transport complexes of the respiratory chain. F-type ATPases consist of two structural domains, F(1) - containing the extramembraneous catalytic core, and F(0) - containing the membrane proton channel, linked together by a central stalk and a peripheral stalk. During catalysis, ATP synthesis in the catalytic domain of F(1) is coupled via a rotary mechanism of the central stalk subunits to proton translocation. Part of the complex F(1) domain and of the central stalk which is part of the complex rotary element. Rotation of the central stalk against the surrounding alpha(3)beta(3) subunits leads to hydrolysis of ATP in three separate catalytic sites on the beta subunits. The chain is Putative ATP synthase subunit epsilon, mitochondrial from Caenorhabditis elegans.